Reading from the N-terminus, the 322-residue chain is tRNA dimethylallyltransferase (322 aa).

Residue 19 to 26 (GPTASGKT) coordinates ATP. 21 to 26 (TASGKT) lines the substrate pocket. 3 interaction with substrate tRNA regions span residues 44–47 (DSAL), 168–172 (QRIQR), and 255–260 (RCVGYR).

Belongs to the IPP transferase family. Monomer. It depends on Mg(2+) as a cofactor.

It carries out the reaction adenosine(37) in tRNA + dimethylallyl diphosphate = N(6)-dimethylallyladenosine(37) in tRNA + diphosphate. Catalyzes the transfer of a dimethylallyl group onto the adenine at position 37 in tRNAs that read codons beginning with uridine, leading to the formation of N6-(dimethylallyl)adenosine (i(6)A). The chain is tRNA dimethylallyltransferase from Cupriavidus necator (strain ATCC 17699 / DSM 428 / KCTC 22496 / NCIMB 10442 / H16 / Stanier 337) (Ralstonia eutropha).